We begin with the raw amino-acid sequence, 178 residues long: ATP-dependent protease subunit HslV (178 aa).

Residue Thr5 is part of the active site. Na(+)-binding residues include Ser161, Cys164, and Thr167.

The protein belongs to the peptidase T1B family. HslV subfamily. In terms of assembly, a double ring-shaped homohexamer of HslV is capped on each side by a ring-shaped HslU homohexamer. The assembly of the HslU/HslV complex is dependent on binding of ATP.

The protein localises to the cytoplasm. It catalyses the reaction ATP-dependent cleavage of peptide bonds with broad specificity.. Allosterically activated by HslU binding. In terms of biological role, protease subunit of a proteasome-like degradation complex believed to be a general protein degrading machinery. This is ATP-dependent protease subunit HslV from Syntrophomonas wolfei subsp. wolfei (strain DSM 2245B / Goettingen).